A 280-amino-acid polypeptide reads, in one-letter code: Large ribosomal subunit protein uL2 (280 aa).

Disordered regions lie at residues 1-59 (MAIR…GGHK) and 223-280 (GVVM…NKKR). 2 stretches are compositionally biased toward basic residues: residues 45-59 (VHGHITTRHKGGGHK) and 269-280 (VRRRRSNKNKKR).

The protein belongs to the universal ribosomal protein uL2 family. In terms of assembly, part of the 50S ribosomal subunit. Forms a bridge to the 30S subunit in the 70S ribosome.

Its function is as follows. One of the primary rRNA binding proteins. Required for association of the 30S and 50S subunits to form the 70S ribosome, for tRNA binding and peptide bond formation. It has been suggested to have peptidyltransferase activity; this is somewhat controversial. Makes several contacts with the 16S rRNA in the 70S ribosome. The polypeptide is Large ribosomal subunit protein uL2 (Corynebacterium jeikeium (strain K411)).